The primary structure comprises 482 residues: DNA polymerase II small subunit (482 aa).

The protein belongs to the DNA polymerase delta/II small subunit family. Heterodimer of a large subunit and a small subunit.

The catalysed reaction is DNA(n) + a 2'-deoxyribonucleoside 5'-triphosphate = DNA(n+1) + diphosphate. The enzyme catalyses Exonucleolytic cleavage in the 3'- to 5'-direction to yield nucleoside 5'-phosphates.. In terms of biological role, possesses two activities: a DNA synthesis (polymerase) and an exonucleolytic activity that degrades single-stranded DNA in the 3' to 5' direction. Has a template-primer preference which is characteristic of a replicative DNA polymerase. The sequence is that of DNA polymerase II small subunit (polB) from Methanothermobacter thermautotrophicus (strain ATCC 29096 / DSM 1053 / JCM 10044 / NBRC 100330 / Delta H) (Methanobacterium thermoautotrophicum).